The primary structure comprises 38 residues: U-theraphotoxin-Aju1a (38 aa).

Intrachain disulfides connect cysteine 3/cysteine 24, cysteine 7/cysteine 30, and cysteine 16/cysteine 35.

As to expression, expressed by the venom gland.

The protein resides in the secreted. In terms of biological role, has strong antifungal activity against C.albicans MDM8, C.krusei IOC 4559 (MIC=2.5-5 uM), C.glabrata IOC 45658 (MIC=2.5-5 uM), C.albicans IOC 45588 (MIC=2.5-5 uM), C.parapsilosis IOC 456416 (MIC=2.5-5 uM), C.tropicalis IOC 45608 (MIC=2.5-5 uM), C.guilliermondii IOC 455716 (MIC=2.5-5 uM) and A.niger (MIC=5-10 uM). Lacks antifungal activity against B.bassiana. Has no antibacterial effect against Gram-positive bacteria M.luteus, S.epidermidis, S.aureus or against Gram-negative bacteria E.coli and P.aeruginosa. Has no hemolytic activity against human erythrocytes. Probable ion channel inhibitor. This Avicularia juruensis (Yellow-banded pinktoe) protein is U-theraphotoxin-Aju1a.